The chain runs to 415 residues: 3-isopropylmalate dehydratase large subunit (415 aa).

[4Fe-4S] cluster-binding residues include C297, C355, and C358.

The protein belongs to the aconitase/IPM isomerase family. LeuC type 2 subfamily. Heterodimer of LeuC and LeuD. [4Fe-4S] cluster serves as cofactor.

The enzyme catalyses (2R,3S)-3-isopropylmalate = (2S)-2-isopropylmalate. It participates in amino-acid biosynthesis; L-leucine biosynthesis; L-leucine from 3-methyl-2-oxobutanoate: step 2/4. Catalyzes the isomerization between 2-isopropylmalate and 3-isopropylmalate, via the formation of 2-isopropylmaleate. The polypeptide is 3-isopropylmalate dehydratase large subunit (Caldivirga maquilingensis (strain ATCC 700844 / DSM 13496 / JCM 10307 / IC-167)).